The following is a 256-amino-acid chain: Membrane-anchored junction protein (256 aa).

At 1-232 (MSLKPFTYPF…HSSPPPPKEP (232 aa)) the chain is on the nuclear side. 2 disordered regions span residues 143 to 197 (KRKL…TPAS) and 211 to 235 (HGLQ…PGAR). Residues 164-173 (ETSSEASSNK) show a composition bias toward polar residues. The span at 175 to 184 (PLKESKRSTD) shows a compositional bias: basic and acidic residues. Residues 233–251 (GARGFLGFLSALFPFRYFF) traverse the membrane as a helical segment. The Perinuclear space segment spans residues 252–256 (KKSGQ).

It belongs to the MAJIN family. As to quaternary structure, component of the MAJIN-TERB1-TERB2 complex, composed of MAJIN, TERB1 and TERB2. Specifically expressed in germline tissues.

Its subcellular location is the nucleus inner membrane. The protein resides in the chromosome. It is found in the telomere. Meiosis-specific telomere-associated protein involved in meiotic telomere attachment to the nucleus inner membrane, a crucial step for homologous pairing and synapsis. Component of the MAJIN-TERB1-TERB2 complex, which promotes telomere cap exchange by mediating attachment of telomeric DNA to the inner nuclear membrane and replacement of the protective cap of telomeric chromosomes: in early meiosis, the MAJIN-TERB1-TERB2 complex associates with telomeric DNA and the shelterin/telosome complex. During prophase, the complex matures and promotes release of the shelterin/telosome complex from telomeric DNA. In the complex, MAJIN acts as the anchoring subunit to the nucleus inner membrane. MAJIN shows DNA-binding activity, possibly for the stabilization of telomere attachment on the nucleus inner membrane. The polypeptide is Membrane-anchored junction protein (Mus musculus (Mouse)).